Consider the following 212-residue polypeptide: 3-isopropylmalate dehydratase small subunit (212 aa).

It belongs to the LeuD family. LeuD type 1 subfamily. Heterodimer of LeuC and LeuD.

The catalysed reaction is (2R,3S)-3-isopropylmalate = (2S)-2-isopropylmalate. Its pathway is amino-acid biosynthesis; L-leucine biosynthesis; L-leucine from 3-methyl-2-oxobutanoate: step 2/4. Its function is as follows. Catalyzes the isomerization between 2-isopropylmalate and 3-isopropylmalate, via the formation of 2-isopropylmaleate. The protein is 3-isopropylmalate dehydratase small subunit of Thiobacillus denitrificans (strain ATCC 25259 / T1).